We begin with the raw amino-acid sequence, 463 residues long: uncharacterized protein (463 aa).

Helical transmembrane passes span 17-37 (ISLMSLGAAIGVGLFLGSASA), 40-60 (LAGPGILVAYAASGLVMFFIM), 97-117 (WFLWVVTCMAEITAVGIYMGF), 122-142 (VPNWIWALSALVIMTGVNFLA), 153-173 (FALIKIVAILSMIAVGLLMII), 201-221 (GVLLSLQMVMFAYLGIEMIGV), 244-264 (ILIFYVGALFVIMSIYPWQEI), 278-298 (VGIPSAAGIINFVVLTAALSS), 335-355 (AVLASAGALLVGVLLNYVVPA), 357-377 (VFTWVTSIATFGAIWTWAIIL), 401-421 (LFPFTSYVSLAFLAFVVILMA), and 429-449 (AVIIGPIWFLILLAVYYGKGF).

This sequence belongs to the amino acid-polyamine-organocation (APC) superfamily.

It localises to the cell membrane. This is an uncharacterized protein from Bacillus subtilis (strain 168).